The chain runs to 260 residues: Thiamine thiazole synthase (260 aa).

Residues Ala36, 55–56 (EQ), Gly63, and 154–156 (HVD) each bind NAD(+). Fe cation-binding residues include Asp156 and His171. Met224 serves as a coordination point for NAD(+). A glycine-binding site is contributed by Arg234.

It belongs to the THI4 family. Homooctamer; tetramer of dimers. The cofactor is Fe(2+).

The catalysed reaction is hydrogen sulfide + glycine + NAD(+) = ADP-5-ethyl-4-methylthiazole-2-carboxylate + nicotinamide + 3 H2O + H(+). It participates in cofactor biosynthesis; thiamine diphosphate biosynthesis. Functionally, involved in the biosynthesis of the thiazole moiety of thiamine. Catalyzes the conversion of NAD and glycine to adenosine diphosphate 5-(2-hydroxyethyl)-4-methylthiazole-2-carboxylate (ADT), an adenylated thiazole intermediate, using free sulfide as a source of sulfur. This Methanosarcina barkeri (strain Fusaro / DSM 804) protein is Thiamine thiazole synthase.